The following is a 434-amino-acid chain: Nicotinate phosphoribosyltransferase (434 aa).

A Phosphohistidine; by autocatalysis modification is found at H242.

The protein belongs to the NAPRTase family. In terms of processing, transiently phosphorylated on a His residue during the reaction cycle. Phosphorylation strongly increases the affinity for substrates and increases the rate of nicotinate D-ribonucleotide production. Dephosphorylation regenerates the low-affinity form of the enzyme, leading to product release.

The enzyme catalyses nicotinate + 5-phospho-alpha-D-ribose 1-diphosphate + ATP + H2O = nicotinate beta-D-ribonucleotide + ADP + phosphate + diphosphate. The protein operates within cofactor biosynthesis; NAD(+) biosynthesis; nicotinate D-ribonucleotide from nicotinate: step 1/1. Its function is as follows. Catalyzes the synthesis of beta-nicotinate D-ribonucleotide from nicotinate and 5-phospho-D-ribose 1-phosphate at the expense of ATP. The sequence is that of Nicotinate phosphoribosyltransferase from Brucella anthropi (strain ATCC 49188 / DSM 6882 / CCUG 24695 / JCM 21032 / LMG 3331 / NBRC 15819 / NCTC 12168 / Alc 37) (Ochrobactrum anthropi).